Reading from the N-terminus, the 584-residue chain is Probable terpene synthase 9 (584 aa).

3 residues coordinate Mg(2+): Asp-339, Asp-343, and Glu-491. The short motif at Asp-339–Asp-343 is the DDXXD motif element.

It belongs to the terpene synthase family. Mg(2+) is required as a cofactor.

Probable sesquiterpene synthase. The protein is Probable terpene synthase 9 (TPS9) of Ricinus communis (Castor bean).